Reading from the N-terminus, the 336-residue chain is Antigen-presenting glycoprotein CD1d1 (336 aa).

The first 21 residues, 1–21 (MRYLPWLLLWAFLQVWGQSEA), serve as a signal peptide directing secretion. Topologically, residues 22 to 305 (QQKNYTFRCL…YWDARQAPVG (284 aa)) are extracellular. Asparagine 25, asparagine 38, and asparagine 60 each carry an N-linked (GlcNAc...) asparagine glycan. Aspartate 98 serves as a coordination point for a D-galactosylceramide. Cystine bridges form between cysteine 122-cysteine 186 and cysteine 226-cysteine 281. Asparagine 128 is a glycosylation site (N-linked (GlcNAc...) asparagine). 171–174 (DQGT) lines the a D-galactosylceramide pocket. N-linked (GlcNAc...) asparagine glycosylation occurs at asparagine 183. One can recognise an Ig-like domain in the interval 207 to 297 (PVAWLSSVPS…LGGQDIILYW (91 aa)). The helical transmembrane segment at 306 to 326 (LIVFIVLIMLVVVGAVVYYIW) threads the bilayer. Over 327–336 (RRRSAYQDIR) the chain is Cytoplasmic. The Internalization signal signature appears at 332 to 335 (YQDI).

In terms of assembly, heterodimer with B2M (beta-2-microglobulin). Interacts with MHC II and CD74. Post-translationally, N-glycosylated. In terms of tissue distribution, expressed on cortical thymocytes, on certain T-cell leukemias, and in various other tissues.

It localises to the cell membrane. It is found in the endosome membrane. Its subcellular location is the lysosome membrane. Antigen-presenting protein that binds self and non-self glycolipids and presents them to T-cell receptors on natural killer T-cells. This Mus musculus (Mouse) protein is Antigen-presenting glycoprotein CD1d1 (Cd1d1).